We begin with the raw amino-acid sequence, 47 residues long: Defensin-like protein 2 (47 aa).

4 disulfide bridges follow: Cys-3-Cys-47, Cys-14-Cys-36, Cys-20-Cys-41, and Cys-24-Cys-43.

This sequence belongs to the DEFL family.

The chain is Defensin-like protein 2 from Zea mays (Maize).